We begin with the raw amino-acid sequence, 341 residues long: L-threonine 3-dehydrogenase (341 aa).

Cysteine 38 contributes to the Zn(2+) binding site. Residues threonine 40 and histidine 43 each act as charge relay system in the active site. Residues histidine 63, glutamate 64, cysteine 93, cysteine 96, cysteine 99, and cysteine 107 each coordinate Zn(2+). NAD(+) is bound by residues isoleucine 175, aspartate 195, arginine 200, 262–264 (LGI), and 286–287 (IY).

This sequence belongs to the zinc-containing alcohol dehydrogenase family. In terms of assembly, homotetramer. It depends on Zn(2+) as a cofactor.

Its subcellular location is the cytoplasm. It carries out the reaction L-threonine + NAD(+) = (2S)-2-amino-3-oxobutanoate + NADH + H(+). It functions in the pathway amino-acid degradation; L-threonine degradation via oxydo-reductase pathway; glycine from L-threonine: step 1/2. In terms of biological role, catalyzes the NAD(+)-dependent oxidation of L-threonine to 2-amino-3-ketobutyrate. This Shigella dysenteriae serotype 1 (strain Sd197) protein is L-threonine 3-dehydrogenase.